The primary structure comprises 757 residues: Transferrin receptor protein 1 (757 aa).

At 1-67 (MMDQARSAIS…KHRRLNGRLC (67 aa)) the chain is on the cytoplasmic side. A mediates interaction with SH3BP4 region spans residues 1-67 (MMDQARSAIS…KHRRLNGRLC (67 aa)). Ser-10 and Ser-19 each carry phosphoserine. Tyr-20 bears the Phosphotyrosine mark. The short motif at 20 to 23 (YTRF) is the Endocytosis signal element. Residue Thr-21 is modified to Phosphothreonine. Ser-24 carries the post-translational modification Phosphoserine. A Stop-transfer sequence motif is present at residues 58–61 (KHRR). Residue Cys-67 is the site of S-palmitoyl cysteine attachment. A helical; Signal-anchor for type II membrane protein transmembrane segment spans residues 68-88 (FGTIAVVIFFLIGFMIGYLGY). Residues 89–757 (CKRTEQKDCV…GDIWDIDNEF (669 aa)) are Extracellular-facing. Residue Thr-103 is glycosylated (O-linked (GalNAc...) threonine). The PA domain occupies 220 to 310 (SKATTVSGKL…GTGDPYTPGF (91 aa)). Residues Asn-248 and Asn-314 are each glycosylated (N-linked (GlcNAc...) asparagine). The segment at 566–757 (NLDTYEKLIQ…GDIWDIDNEF (192 aa)) is ligand-binding. The Cell attachment site motif lies at 643–645 (RGD). 2 N-linked (GlcNAc...) asparagine glycosylation sites follow: Asn-719 and Asn-724.

This sequence belongs to the peptidase M28 family. M28B subfamily. As to quaternary structure, homodimer; disulfide-linked. Binds one transferrin molecule per subunit. Interacts with SH3BP4. Interacts with STEAP3; facilitates TFRC endocytosis in erythroid precursor cells. Stearoylated by ZDHHC6 which inhibits TFRC-mediated activation of the JNK pathway and promotes mitochondrial fragmentation. Stearoylation does not affect iron uptake. Post-translationally, N- and O-glycosylated, phosphorylated and palmitoylated.

It is found in the cell membrane. Its subcellular location is the melanosome. Functionally, cellular uptake of iron occurs via receptor-mediated endocytosis of ligand-occupied transferrin receptor into specialized endosomes. Endosomal acidification leads to iron release. The apotransferrin-receptor complex is then recycled to the cell surface with a return to neutral pH and the concomitant loss of affinity of apotransferrin for its receptor. Transferrin receptor is necessary for development of erythrocytes and the nervous system. Positively regulates T and B cell proliferation through iron uptake. Acts as a lipid sensor that regulates mitochondrial fusion by regulating activation of the JNK pathway. When dietary levels of stearate (C18:0) are low, promotes activation of the JNK pathway, resulting in HUWE1-mediated ubiquitination and subsequent degradation of the mitofusin MFN2 and inhibition of mitochondrial fusion. When dietary levels of stearate (C18:0) are high, TFRC stearoylation inhibits activation of the JNK pathway and thus degradation of the mitofusin MFN2. Mediates uptake of NICOL1 into fibroblasts where it may regulate extracellular matrix production. This Cricetulus griseus (Chinese hamster) protein is Transferrin receptor protein 1 (TFRC).